Here is a 181-residue protein sequence, read N- to C-terminus: GTP cyclohydrolase 1 2 (181 aa).

The protein belongs to the GTP cyclohydrolase I family. Homomer.

The enzyme catalyses GTP + H2O = 7,8-dihydroneopterin 3'-triphosphate + formate + H(+). Its pathway is cofactor biosynthesis; 7,8-dihydroneopterin triphosphate biosynthesis; 7,8-dihydroneopterin triphosphate from GTP: step 1/1. This Pseudomonas syringae pv. tomato (strain ATCC BAA-871 / DC3000) protein is GTP cyclohydrolase 1 2.